A 293-amino-acid polypeptide reads, in one-letter code: Elongation factor Ts (293 aa).

An involved in Mg(2+) ion dislocation from EF-Tu region spans residues 80–83 (TDFV).

Belongs to the EF-Ts family.

The protein resides in the cytoplasm. Its function is as follows. Associates with the EF-Tu.GDP complex and induces the exchange of GDP to GTP. It remains bound to the aminoacyl-tRNA.EF-Tu.GTP complex up to the GTP hydrolysis stage on the ribosome. The polypeptide is Elongation factor Ts (Paraburkholderia xenovorans (strain LB400)).